A 1503-amino-acid polypeptide reads, in one-letter code: Lysophospholipase NTE1 (1503 aa).

Residues 1–25 (MDSSTAALATASAKLDAVAQQGSSS) lie on the Cytoplasmic side of the membrane. A helical membrane pass occupies residues 26–46 (WIGFFANIILGIISLVYSILY). Residues 47–71 (SVLKLTTFSIPSLLYTLFSTSLTVT) lie on the Lumenal side of the membrane. Residues 72–92 (MNATTLMLIIVLVFSLVSWFV) traverse the membrane as a helical segment. Residues 93 to 1503 (RYRYLNMYSR…RTMAPRRASI (1411 aa)) lie on the Cytoplasmic side of the membrane. Disordered regions lie at residues 252–348 (RHGG…TTSV), 454–561 (TKGI…SNPF), and 722–745 (KNESSLNIGPGNQQGSAGRDRFMD). Polar residues-rich tracts occupy residues 262-272 (TSATETYTSSR), 285-302 (STVSVPTTPQLERSSSHG), 487-496 (QRPSSVTASP), 506-542 (KHTSNSGDLLMNIQLSRNGGRRSTSNMDPLTRQSTLL), 552-561 (PLSQRTSNPF), and 723-737 (NESSLNIGPGNQQGS). A nucleoside 3',5'-cyclic phosphate-binding positions include 658–777 (GLPV…GYVG) and 821–941 (RLTN…IASR). One can recognise a PNPLA domain in the interval 1200-1364 (LVLGGGGARG…IDNLTVSHMK (165 aa)). The short motif at 1204–1209 (GGGARG) is the GXGXXG element. The GXSXG motif lies at 1231–1235 (GTSIG). S1233 serves as the catalytic Nucleophile. D1351 serves as the catalytic Proton acceptor. The DGA/G signature appears at 1351 to 1353 (DGG).

This sequence belongs to the NTE family.

Its subcellular location is the endoplasmic reticulum membrane. It catalyses the reaction a 1-acyl-sn-glycero-3-phosphocholine + H2O = sn-glycerol 3-phosphocholine + a fatty acid + H(+). With respect to regulation, inhibited by organophosphorus esters. In terms of biological role, intracellular phospholipase B that catalyzes the double deacylation of phosphatidylcholine (PC) to glycerophosphocholine (GroPCho). Plays an important role in membrane lipid homeostasis. Responsible for the rapid PC turnover in response to inositol, elevated temperatures, or when choline is present in the growth medium. The sequence is that of Lysophospholipase NTE1 (NTE1) from Pyricularia oryzae (strain 70-15 / ATCC MYA-4617 / FGSC 8958) (Rice blast fungus).